Consider the following 424-residue polypeptide: Tol-Pal system protein TolB (424 aa).

The signal sequence occupies residues 1–24 (MNKARAIARWISFLLLIAAGQVCA).

This sequence belongs to the TolB family. The Tol-Pal system is composed of five core proteins: the inner membrane proteins TolA, TolQ and TolR, the periplasmic protein TolB and the outer membrane protein Pal. They form a network linking the inner and outer membranes and the peptidoglycan layer.

The protein resides in the periplasm. Part of the Tol-Pal system, which plays a role in outer membrane invagination during cell division and is important for maintaining outer membrane integrity. This chain is Tol-Pal system protein TolB, found in Methylococcus capsulatus (strain ATCC 33009 / NCIMB 11132 / Bath).